The primary structure comprises 161 residues: Immunity protein YezG (161 aa).

As to quaternary structure, monomer. Interacts with the C-terminus of cognate toxin YeeF, probably with 2:2 stoichiometry. The second YezG molecules binds with lower affinity.

It localises to the cytoplasm. Functionally, immunity component of an LXG toxin-immunity module. These modules promote kin selection, mediate competition in biofilms, and drive spatial segregation of different strains, indicating that LXG toxins may help avoid warfare between strains in biofilms. Neutralizes the toxic abilities of cognate toxin YeeF upon expression in E.coli and in vitro. This Bacillus spizizenii (strain ATCC 23059 / NRRL B-14472 / W23) (Bacillus subtilis subsp. spizizenii) protein is Immunity protein YezG.